Consider the following 159-residue polypeptide: uncharacterized protein (159 aa).

Residues 7–151 (LLINYKTLEE…NPLVWHPASE (145 aa)) enclose the N-acetyltransferase domain.

This is an uncharacterized protein from Bacillus licheniformis (strain ATCC 14580 / DSM 13 / JCM 2505 / CCUG 7422 / NBRC 12200 / NCIMB 9375 / NCTC 10341 / NRRL NRS-1264 / Gibson 46).